The sequence spans 590 residues: Phosphatidylserine decarboxylase proenzyme 1, mitochondrial (590 aa).

Residues Met-1–Phe-59 constitute a mitochondrion transit peptide. Over Ser-60–Trp-140 the chain is Mitochondrial matrix. Residues Trp-141–Tyr-159 traverse the membrane as a helical segment. Over Glu-160–Val-590 the chain is Mitochondrial intermembrane. Residues Asp-260, His-403, and Ser-558 each act as charge relay system; for autoendoproteolytic cleavage activity in the active site. Catalysis depends on Ser-558, which acts as the Schiff-base intermediate with substrate; via pyruvic acid; for decarboxylase activity. Position 558 is a pyruvic acid (Ser); by autocatalysis (Ser-558).

It belongs to the phosphatidylserine decarboxylase family. PSD-B subfamily. Eukaryotic type I sub-subfamily. In terms of assembly, heterodimer of a large membrane-associated beta subunit and a small pyruvoyl-containing alpha subunit. Requires pyruvate as cofactor. Post-translationally, is synthesized initially as an inactive proenzyme. Formation of the active enzyme involves a self-maturation process in which the active site pyruvoyl group is generated from an internal serine residue via an autocatalytic post-translational modification. Two non-identical subunits are generated from the proenzyme in this reaction, and the pyruvate is formed at the N-terminus of the alpha chain, which is derived from the carboxyl end of the proenzyme. The autoendoproteolytic cleavage occurs by a canonical serine protease mechanism, in which the side chain hydroxyl group of the serine supplies its oxygen atom to form the C-terminus of the beta chain, while the remainder of the serine residue undergoes an oxidative deamination to produce ammonia and the pyruvoyl prosthetic group on the alpha chain. During this reaction, the Ser that is part of the protease active site of the proenzyme becomes the pyruvoyl prosthetic group, which constitutes an essential element of the active site of the mature decarboxylase.

Its subcellular location is the mitochondrion inner membrane. It catalyses the reaction a 1,2-diacyl-sn-glycero-3-phospho-L-serine + H(+) = a 1,2-diacyl-sn-glycero-3-phosphoethanolamine + CO2. The protein operates within phospholipid metabolism; phosphatidylethanolamine biosynthesis; phosphatidylethanolamine from CDP-diacylglycerol: step 2/2. In terms of biological role, catalyzes the formation of phosphatidylethanolamine (PtdEtn) from phosphatidylserine (PtdSer). Plays a central role in phospholipid metabolism and in the interorganelle trafficking of phosphatidylserine. Important for virulence. The polypeptide is Phosphatidylserine decarboxylase proenzyme 1, mitochondrial (Candida albicans (strain SC5314 / ATCC MYA-2876) (Yeast)).